The following is a 393-amino-acid chain: Probable acetyl-CoA acyltransferase (393 aa).

Cysteine 88 acts as the Acyl-thioester intermediate in catalysis. Residues histidine 349 and cysteine 378 each act as proton acceptor in the active site.

The protein belongs to the thiolase-like superfamily. Thiolase family.

It localises to the cytoplasm. It catalyses the reaction 2 acetyl-CoA = acetoacetyl-CoA + CoA. This chain is Probable acetyl-CoA acyltransferase, found in Staphylococcus aureus (strain MRSA252).